We begin with the raw amino-acid sequence, 188 residues long: Protease-associated domain-containing protein 1 (188 aa).

The signal sequence occupies residues 1–21 (MVPGAAGWCCLVLWLPACVAA). In terms of domain architecture, PA spans 83–163 (IQDQIALVER…RSLEQHGLPW (81 aa)). Asn-171 carries an N-linked (GlcNAc...) asparagine glycan.

N-glycosylated; required for efficient secretion. As to expression, highly expressed in skeletal muscle, heart and liver. Expressed at intermediate level in kidney.

It is found in the secreted. Functionally, plays a role in the modulation of physical activity and adiposity. This is Protease-associated domain-containing protein 1 from Homo sapiens (Human).